The primary structure comprises 855 residues: Inactive rhomboid protein 1 (855 aa).

A disordered region spans residues 1 to 35 (MSEARRDSTSSLQRKKPPWLKLDIPSAAPATAEEP). Topologically, residues 1–411 (MSEARRDSTS…HRPFFTYWLT (411 aa)) are cytoplasmic. Over residues 25-35 (PSAAPATAEEP) the composition is skewed to low complexity. S76 and S176 each carry phosphoserine. Residues T180 and T183 each carry the phosphothreonine modification. Position 390 is a phosphoserine (S390). The helical transmembrane segment at 412–432 (FVHSLVTILAVCIYGIAPVGF) threads the bilayer. Residues 433-655 (SQHETVDSVL…NPEVPDQFYR (223 aa)) lie on the Lumenal side of the membrane. The N-linked (GlcNAc...) asparagine glycan is linked to N583. A helical transmembrane segment spans residues 656–676 (LWLSLFLHAGILHCLVSICFQ). The Cytoplasmic segment spans residues 677–691 (MTVLRDLEKLAGWHR). A helical transmembrane segment spans residues 692-712 (IAIIYLLSGVTGNLASAIFLP). Residues 713-714 (YR) lie on the Lumenal side of the membrane. The chain crosses the membrane as a helical span at residues 715-735 (AEVGPAGSQFGILACLFVELF). Over 736–746 (QSWQILARPWR) the chain is Cytoplasmic. A helical transmembrane segment spans residues 747–767 (AFFKLLAVVLFLFTFGLLPWI). Residues 768 to 772 (DNFAH) are Lumenal-facing. The helical transmembrane segment at 773–793 (ISGFISGLFLSFAFLPYISFG) threads the bilayer. At 794–803 (KFDLYRKRCQ) the chain is on the cytoplasmic side. A helical transmembrane segment spans residues 804–824 (IIVFQVVFLGLLAGLVVLFYV). Residues 825-855 (YPVRCEWCEFLTCIPFTDKFCEKYELDAQLH) lie on the Lumenal side of the membrane.

Belongs to the peptidase S54 family. Homodimer, or homooligomer. Interacts with TGFA and HBEGF. Interacts with EGF; may retain EGF in the endoplasmic reticulum and regulates its degradation through the endoplasmic reticulum-associated degradation (ERAD). Interacts (via cytoplasmic N-terminus) with FRMD8/iTAP; this interaction leads to mutual protein stabilization. Interacts with ADAM17/TACE.

The protein localises to the endoplasmic reticulum membrane. It localises to the golgi apparatus membrane. Regulates ADAM17 protease, a sheddase of the epidermal growth factor (EGF) receptor ligands and TNF, thereby plays a role in sleep, cell survival, proliferation, migration and inflammation. Does not exhibit any protease activity on its own. This Callithrix jacchus (White-tufted-ear marmoset) protein is Inactive rhomboid protein 1 (RHBDF1).